The following is a 557-amino-acid chain: Glucose-6-phosphate isomerase (557 aa).

The Proton donor role is filled by Glu361. Active-site residues include His392 and Lys520.

Belongs to the GPI family.

The protein localises to the cytoplasm. It catalyses the reaction alpha-D-glucose 6-phosphate = beta-D-fructose 6-phosphate. It functions in the pathway carbohydrate biosynthesis; gluconeogenesis. It participates in carbohydrate degradation; glycolysis; D-glyceraldehyde 3-phosphate and glycerone phosphate from D-glucose: step 2/4. Catalyzes the reversible isomerization of glucose-6-phosphate to fructose-6-phosphate. This chain is Glucose-6-phosphate isomerase, found in Acinetobacter venetianus (strain ATCC 31012 / DSM 23050 / BCRC 14357 / CCUG 45561 / CIP 110063 / KCTC 2702 / LMG 19082 / RAG-1).